Here is a 231-residue protein sequence, read N- to C-terminus: MSEKIVVVDDEKEIADLVTTFLQNEGFSVQPFYDGTSAIAYIEKEAIDLAVLDVMLPDIDGFQLLQQIRKTHFFPVLMLTAKGEDLDKITGLSLGADDYVTKPFNPLEVVARVKTQLRRYQRYNHSTASPTVEEYEKDGLILKINSHQCILYGKEVFLTPIEFKILLYLFEHQGSVVSSETLFEAVWKEKYLDNNNTVMAHIARLREKLHEEPRKPKLIKTVWGVGYIIEK.

The 114-residue stretch at Lys4–Leu117 folds into the Response regulatory domain. Asp53 is subject to 4-aspartylphosphate. The segment at residues Val132–Lys231 is a DNA-binding region (ompR/PhoB-type).

In terms of processing, phosphorylated by VanSc.

Its subcellular location is the cytoplasm. In terms of biological role, member of the two-component regulatory system VanSc/VanRc. Binds to the promoter regions of target genes. Activates the transcription of vanC1 and vanXYC in response to vancomycin which results in vancomycin resistance. The polypeptide is Regulatory protein VanRc (Enterococcus gallinarum).